The following is a 323-amino-acid chain: tRNA U34 carboxymethyltransferase (323 aa).

Carboxy-S-adenosyl-L-methionine-binding positions include Lys91, Trp105, Lys110, Gly130, 181 to 182 (IE), Met196, Tyr200, and Arg315.

This sequence belongs to the class I-like SAM-binding methyltransferase superfamily. CmoB family. As to quaternary structure, homotetramer.

It catalyses the reaction carboxy-S-adenosyl-L-methionine + 5-hydroxyuridine(34) in tRNA = 5-carboxymethoxyuridine(34) in tRNA + S-adenosyl-L-homocysteine + H(+). Functionally, catalyzes carboxymethyl transfer from carboxy-S-adenosyl-L-methionine (Cx-SAM) to 5-hydroxyuridine (ho5U) to form 5-carboxymethoxyuridine (cmo5U) at position 34 in tRNAs. This is tRNA U34 carboxymethyltransferase from Serratia proteamaculans (strain 568).